A 182-amino-acid polypeptide reads, in one-letter code: Large ribosomal subunit protein uL6 (182 aa).

The protein belongs to the universal ribosomal protein uL6 family. Part of the 50S ribosomal subunit.

Its function is as follows. This protein binds to the 23S rRNA, and is important in its secondary structure. It is located near the subunit interface in the base of the L7/L12 stalk, and near the tRNA binding site of the peptidyltransferase center. This chain is Large ribosomal subunit protein uL6, found in Dehalococcoides mccartyi (strain ATCC BAA-2266 / KCTC 15142 / 195) (Dehalococcoides ethenogenes (strain 195)).